The sequence spans 400 residues: Deoxyguanosinetriphosphate triphosphohydrolase-like protein (400 aa).

The HD domain occupies 76–204 (RLTHTLEVAQ…VNIADPLAYC (129 aa)).

It belongs to the dGTPase family. Type 2 subfamily.

This is Deoxyguanosinetriphosphate triphosphohydrolase-like protein from Syntrophus aciditrophicus (strain SB).